Consider the following 124-residue polypeptide: Holo-[acyl-carrier-protein] synthase (124 aa).

2 residues coordinate Mg(2+): Asp-8 and Glu-56.

It belongs to the P-Pant transferase superfamily. AcpS family. Mg(2+) serves as cofactor.

It localises to the cytoplasm. The enzyme catalyses apo-[ACP] + CoA = holo-[ACP] + adenosine 3',5'-bisphosphate + H(+). Functionally, transfers the 4'-phosphopantetheine moiety from coenzyme A to a Ser of acyl-carrier-protein. This is Holo-[acyl-carrier-protein] synthase from Clostridium acetobutylicum (strain ATCC 824 / DSM 792 / JCM 1419 / IAM 19013 / LMG 5710 / NBRC 13948 / NRRL B-527 / VKM B-1787 / 2291 / W).